Reading from the N-terminus, the 302-residue chain is RuBisCO operon transcriptional regulator (302 aa).

The HTH lysR-type domain maps to 1 to 60 (MHVSLRQLRVFEAVARHNSYTRAAEELHLSQPAVSMQVRQLEDEIGLSLFERLGKQVVLT). Positions 20–39 (YTRAAEELHLSQPAVSMQVR) form a DNA-binding region, H-T-H motif.

This sequence belongs to the LysR transcriptional regulatory family.

Trans-acting transcriptional regulator of RuBisCO genes (rbcAB) expression. This chain is RuBisCO operon transcriptional regulator (rbcR), found in Allochromatium vinosum (Chromatium vinosum).